A 294-amino-acid polypeptide reads, in one-letter code: MNFFQAIILGIVQALTEYLPVSSSAHIRIFGDLMLGSDPGAAFTAIIQIGTELAVILYFRHDIINILTHWFSCLFGKNGKDWKARMGRGDNYATLGWNIIVGSIPIIILGFTLQNVIETSLRNLWITVTVLLVFGILLWMVDAKARQNKTMNDMTYRDAFLFGLGQSMALIPGVSRSGGTITVGRALGYTREAAVRLSFLMAIPAVFGSGLLEAIKAVKNYKTDAMFPGWGPTLVAMVISFVLGYIVIIGFLKFVSNFSYKAFAIYRIGLAVVVALLLIVGVLPAIDPSVVAAA.

The next 6 membrane-spanning stretches (helical) occupy residues proline 39–phenylalanine 59, alanine 93–leucine 113, asparagine 123–alanine 143, serine 198–valine 218, proline 232–leucine 252, and isoleucine 268–proline 288.

It belongs to the UppP family.

The protein resides in the cell membrane. It catalyses the reaction di-trans,octa-cis-undecaprenyl diphosphate + H2O = di-trans,octa-cis-undecaprenyl phosphate + phosphate + H(+). In terms of biological role, catalyzes the dephosphorylation of undecaprenyl diphosphate (UPP). Confers resistance to bacitracin. In Bifidobacterium longum (strain DJO10A), this protein is Undecaprenyl-diphosphatase.